A 139-amino-acid chain; its full sequence is Putative pre-16S rRNA nuclease (139 aa).

Belongs to the YqgF nuclease family.

Its subcellular location is the cytoplasm. Functionally, could be a nuclease involved in processing of the 5'-end of pre-16S rRNA. The sequence is that of Putative pre-16S rRNA nuclease from Pectobacterium carotovorum subsp. carotovorum (strain PC1).